The primary structure comprises 182 residues: Large ribosomal subunit protein uL6 (182 aa).

It belongs to the universal ribosomal protein uL6 family. Part of the 50S ribosomal subunit.

Its function is as follows. This protein binds to the 23S rRNA, and is important in its secondary structure. It is located near the subunit interface in the base of the L7/L12 stalk, and near the tRNA binding site of the peptidyltransferase center. The sequence is that of Large ribosomal subunit protein uL6 from Methanococcus vannielii.